Consider the following 214-residue polypeptide: Redox-sensing transcriptional repressor Rex (214 aa).

Residues 16–55 constitute a DNA-binding region (H-T-H motif); sequence LYYRYLIFLNDEGKEKVSSTELAEAVQVDSASIRRDFSYF. 90–95 is a binding site for NAD(+); sequence GVGNMG.

It belongs to the transcriptional regulatory Rex family. In terms of assembly, homodimer.

The protein resides in the cytoplasm. Its function is as follows. Modulates transcription in response to changes in cellular NADH/NAD(+) redox state. The sequence is that of Redox-sensing transcriptional repressor Rex from Lactobacillus gasseri (strain ATCC 33323 / DSM 20243 / BCRC 14619 / CIP 102991 / JCM 1131 / KCTC 3163 / NCIMB 11718 / NCTC 13722 / AM63).